Here is a 68-residue protein sequence, read N- to C-terminus: MKFTATFLMMAIFVLMVEPGECGWGSFFKKAAHVGKHVGKAALTHYLGDKQELNKRAVDEDPNVIVFE.

Residues 1–22 form the signal peptide; the sequence is MKFTATFLMMAIFVLMVEPGEC. Positions 48-68 are excised as a propeptide; it reads GDKQELNKRAVDEDPNVIVFE.

Belongs to the pleurocidin family. In terms of tissue distribution, goblet cells.

The protein resides in the secreted. The protein localises to the membrane. In terms of biological role, antimicrobial peptide with potent activity against Gram-positive and Gram-negative bacteria. Activity against E.coli and B.subtilis. Weaker activity against L.mucor, s.marcescens and P.aeruginosa. May play a role in innate host defense. This Pseudopleuronectes americanus (Winter flounder) protein is Pleurocidin (ple1).